The sequence spans 394 residues: NAD(P)H-quinone oxidoreductase subunit H (394 aa).

This sequence belongs to the complex I 49 kDa subunit family. In terms of assembly, NDH-1 can be composed of about 15 different subunits; different subcomplexes with different compositions have been identified which probably have different functions.

It is found in the cellular thylakoid membrane. It carries out the reaction a plastoquinone + NADH + (n+1) H(+)(in) = a plastoquinol + NAD(+) + n H(+)(out). The catalysed reaction is a plastoquinone + NADPH + (n+1) H(+)(in) = a plastoquinol + NADP(+) + n H(+)(out). NDH-1 shuttles electrons from an unknown electron donor, via FMN and iron-sulfur (Fe-S) centers, to quinones in the respiratory and/or the photosynthetic chain. The immediate electron acceptor for the enzyme in this species is believed to be plastoquinone. Couples the redox reaction to proton translocation, and thus conserves the redox energy in a proton gradient. Cyanobacterial NDH-1 also plays a role in inorganic carbon-concentration. This Prochlorococcus marinus (strain MIT 9211) protein is NAD(P)H-quinone oxidoreductase subunit H.